Here is a 507-residue protein sequence, read N- to C-terminus: 2,3-bisphosphoglycerate-independent phosphoglycerate mutase (507 aa).

The Mn(2+) site is built by Asp-13 and Ser-63. The active-site Phosphoserine intermediate is the Ser-63. Residues His-122, Arg-152 to Asp-153, Arg-184, Arg-190, Arg-256 to Arg-259, and Lys-330 each bind substrate. 5 residues coordinate Mn(2+): Asp-397, His-401, Asp-438, His-439, and His-457.

It belongs to the BPG-independent phosphoglycerate mutase family. Monomer. The cofactor is Mn(2+).

It carries out the reaction (2R)-2-phosphoglycerate = (2R)-3-phosphoglycerate. It functions in the pathway carbohydrate degradation; glycolysis; pyruvate from D-glyceraldehyde 3-phosphate: step 3/5. Its function is as follows. Catalyzes the interconversion of 2-phosphoglycerate and 3-phosphoglycerate. The chain is 2,3-bisphosphoglycerate-independent phosphoglycerate mutase from Chromobacterium violaceum (strain ATCC 12472 / DSM 30191 / JCM 1249 / CCUG 213 / NBRC 12614 / NCIMB 9131 / NCTC 9757 / MK).